A 710-amino-acid chain; its full sequence is Polyribonucleotide nucleotidyltransferase (710 aa).

The Mg(2+) site is built by aspartate 489 and aspartate 495. One can recognise a KH domain in the interval 556 to 615 (PKIDTIKIDVDKIKVVIGKGGETIDKIIAETGVKIDIDDEGNVSIYSSDQAAIDRTKEII). Residues 625–693 (GEVYHAKVIR…EKGRVDASMK (69 aa)) enclose the S1 motif domain. Residues 691-710 (SMKALIPRPPKPEKKEEKHD) form a disordered region. Residues 700–710 (PKPEKKEEKHD) are compositionally biased toward basic and acidic residues.

This sequence belongs to the polyribonucleotide nucleotidyltransferase family. It depends on Mg(2+) as a cofactor.

The protein localises to the cytoplasm. It carries out the reaction RNA(n+1) + phosphate = RNA(n) + a ribonucleoside 5'-diphosphate. In terms of biological role, involved in mRNA degradation. Catalyzes the phosphorolysis of single-stranded polyribonucleotides processively in the 3'- to 5'-direction. In Streptococcus pyogenes serotype M18 (strain MGAS8232), this protein is Polyribonucleotide nucleotidyltransferase.